The primary structure comprises 319 residues: ATP-dependent 6-phosphofructokinase (319 aa).

Residue Gly11 coordinates ATP. 21–25 is an ADP binding site; the sequence is RAVTR. Residues 72–73 and 102–105 contribute to the ATP site; these read RF and GDGS. Position 103 (Asp103) interacts with Mg(2+). Residue 125 to 127 coordinates substrate; it reads SID. The active-site Proton acceptor is the Asp127. An ADP-binding site is contributed by Arg154. Substrate-binding positions include Arg162 and 169-171; that span reads MGR. ADP contacts are provided by residues 185-187 and 213-215; these read GAD and KKH. Residues Glu222, Arg243, and 249–252 each bind substrate; that span reads HMQR.

Belongs to the phosphofructokinase type A (PFKA) family. ATP-dependent PFK group I subfamily. Prokaryotic clade 'B1' sub-subfamily. As to quaternary structure, homotetramer. Requires Mg(2+) as cofactor.

It localises to the cytoplasm. The enzyme catalyses beta-D-fructose 6-phosphate + ATP = beta-D-fructose 1,6-bisphosphate + ADP + H(+). It participates in carbohydrate degradation; glycolysis; D-glyceraldehyde 3-phosphate and glycerone phosphate from D-glucose: step 3/4. Its activity is regulated as follows. Allosterically activated by ADP and other diphosphonucleosides, and allosterically inhibited by phosphoenolpyruvate. In terms of biological role, catalyzes the phosphorylation of D-fructose 6-phosphate to fructose 1,6-bisphosphate by ATP, the first committing step of glycolysis. In Lactobacillus gasseri (strain ATCC 33323 / DSM 20243 / BCRC 14619 / CIP 102991 / JCM 1131 / KCTC 3163 / NCIMB 11718 / NCTC 13722 / AM63), this protein is ATP-dependent 6-phosphofructokinase.